A 473-amino-acid chain; its full sequence is Sensor histidine kinase GtrS (473 aa).

Residues 1 to 8 (MPRSLLGR) are Cytoplasmic-facing. Residues 9 to 29 (MLLLTLLAVLVAQGLSSLFWL) form a helical membrane-spanning segment. Over 30–197 (SHLRSSQREG…LEPEGLQPQQ (168 aa)) the chain is Periplasmic. The helical transmembrane segment at 198–218 (VLSIVFTSLLLLLFTGLLMHW) threads the bilayer. An HAMP domain is found at 217 to 269 (HWQSRPLKRLARAARDLALGSPSAALEERGASELVEVARAFNTMHERIDRYLN). Over 219-473 (QSRPLKRLAR…SLRLPRLGLE (255 aa)) the chain is Cytoplasmic. Positions 277–471 (AISHDLRTPI…RVSLRLPRLG (195 aa)) constitute a Histidine kinase domain. His-280 carries the post-translational modification Phosphohistidine; by autocatalysis.

Autophosphorylated.

The protein resides in the cell inner membrane. The catalysed reaction is ATP + protein L-histidine = ADP + protein N-phospho-L-histidine.. Member of the two-component regulatory system GtrS/GltR involved in the regulation of glucose metabolism and transport, as well as regulation of the exotoxin A gene expression. GtrS recognizes and binds 2-ketogluconate and 6-phosphogluconate via its sensor domain, which accelerates GtrS autophosphorylation and concomitant transphosphorylation and regulation of the response regulator GltR. In terms of biological role, plays a key role during bacteria-host interactions and is required for optimal colonization and dissemination in a mouse model of infection. Contributes to modulation of the type III secretion system (T3SS) in response to host cells via the regulation of the OprB transport system. The chain is Sensor histidine kinase GtrS from Pseudomonas aeruginosa (strain ATCC 15692 / DSM 22644 / CIP 104116 / JCM 14847 / LMG 12228 / 1C / PRS 101 / PAO1).